A 72-amino-acid chain; its full sequence is DNA-directed RNA polymerase subunit omega (72 aa).

It belongs to the RNA polymerase subunit omega family. In terms of assembly, the RNAP catalytic core consists of 2 alpha, 1 beta, 1 beta' and 1 omega subunit. When a sigma factor is associated with the core the holoenzyme is formed, which can initiate transcription.

The enzyme catalyses RNA(n) + a ribonucleoside 5'-triphosphate = RNA(n+1) + diphosphate. Promotes RNA polymerase assembly. Latches the N- and C-terminal regions of the beta' subunit thereby facilitating its interaction with the beta and alpha subunits. In Francisella tularensis subsp. holarctica (strain LVS), this protein is DNA-directed RNA polymerase subunit omega.